We begin with the raw amino-acid sequence, 512 residues long: GMP synthase [glutamine-hydrolyzing] (512 aa).

A Glutamine amidotransferase type-1 domain is found at 5–195; that stretch reads GIVILDFGSQ…IFGIAKAEKN (191 aa). C82 serves as the catalytic Nucleophile. Residues H169 and E171 contribute to the active site. A GMPS ATP-PPase domain is found at 196–387; the sequence is WSMENYIEST…LGIPDYMVDR (192 aa). 223 to 229 lines the ATP pocket; the sequence is SGGVDSS.

Homodimer.

It carries out the reaction XMP + L-glutamine + ATP + H2O = GMP + L-glutamate + AMP + diphosphate + 2 H(+). Its pathway is purine metabolism; GMP biosynthesis; GMP from XMP (L-Gln route): step 1/1. Its function is as follows. Catalyzes the synthesis of GMP from XMP. The protein is GMP synthase [glutamine-hydrolyzing] of Fusobacterium nucleatum subsp. nucleatum (strain ATCC 25586 / DSM 15643 / BCRC 10681 / CIP 101130 / JCM 8532 / KCTC 2640 / LMG 13131 / VPI 4355).